Here is a 72-residue protein sequence, read N- to C-terminus: Protein RALF-like 20 (72 aa).

The N-terminal stretch at 1-27 is a signal peptide; the sequence is MVLSKKTIMQSFALMIILSIVMSTTEA. Intrachain disulfides connect C43–C51 and C63–C69.

This sequence belongs to the plant rapid alkalinization factor (RALF) family.

It is found in the secreted. In terms of biological role, cell signaling peptide that may regulate plant stress, growth, and development. Mediates a rapid alkalinization of extracellular space by mediating a transient increase in the cytoplasmic Ca(2+) concentration leading to a calcium-dependent signaling events through a cell surface receptor and a concomitant activation of some intracellular mitogen-activated protein kinases. This chain is Protein RALF-like 20 (RALFL20), found in Arabidopsis thaliana (Mouse-ear cress).